The sequence spans 112 residues: UPF0060 membrane protein SCO3297 (112 aa).

The next 4 membrane-spanning stretches (helical) occupy residues alanine 8–valine 28, glycine 33–phenylalanine 53, isoleucine 62–aspartate 82, and arginine 88–proline 108.

Belongs to the UPF0060 family.

Its subcellular location is the cell membrane. This is UPF0060 membrane protein SCO3297 from Streptomyces coelicolor (strain ATCC BAA-471 / A3(2) / M145).